Reading from the N-terminus, the 373-residue chain is 3-isopropylmalate dehydrogenase AMT6 (373 aa).

77 to 79 (VGG) contacts NADP(+). The substrate site is built by Arg-97 and Arg-136. Mg(2+)-binding residues include Asp-227, Asp-252, and Asp-256. 284-289 (SRIRGL) contributes to the NADP(+) binding site.

This sequence belongs to the isocitrate and isopropylmalate dehydrogenases family. As to quaternary structure, homodimer. Mg(2+) is required as a cofactor. Mn(2+) serves as cofactor.

The enzyme catalyses (2R,3S)-3-isopropylmalate + NAD(+) = 4-methyl-2-oxopentanoate + CO2 + NADH. It participates in amino-acid biosynthesis; L-leucine biosynthesis; L-leucine from 3-methyl-2-oxobutanoate: step 3/4. It functions in the pathway mycotoxin biosynthesis. Its function is as follows. 3-isopropylmalate dehydrogenase; part of the gene clusters that mediate the biosynthesis of AM-toxins, host-selective toxins (HSTs) causing Alternaria blotch on apple, a worldwide distributed disease. AM-toxins are cyclic depsipeptides containing the 3 residues 2-hydroxy-isovaleric acid (2-HIV), dehydroalanine, L-alanine which are common for all 3 AM-toxins I to III. The fourth precursor is L-alpha-amino-methoxyphenyl-valeric acid (L-Amv) for AM-toxin I, L-alpha-amino-phenyl-valeric acid (L-Apv) for AM-toxin II, and L-alpha-amino-hydroxyphenyl-valeric acid (L-Ahv) for AM-toxin III. AM-toxins have two target sites for affecting susceptible apple cells; they cause invagination of the plasma membrane and electrolyte loss and chloroplast disorganization. The non-ribosomal peptide synthetase AMT1 contains 4 catalytic modules and is responsible for activation of each residue in AM-toxin. The aldo-keto reductase AMT2 catalyzes the conversion of 2-keto-isovaleric acid (2-KIV) to 2-hydroxy-isovaleric acid (2-HIV), one of the precursor residues incorporated by AMT1 during AM-toxin biosynthesis, by reduction of its ketone to an alcohol. The cytochrome P450 monooxygenase AMT3 and the thioesterase AMT4 are also important for AM-toxin production, but their exact function within the AM-toxin biosynthesis are not known yet. Up to 21 proteins (including AMT1 to AMT4) are predicted to be involved in AM-toxin biosynthesis since their expression ishighly up-regulated in AM-toxin-producing cultures. The protein is 3-isopropylmalate dehydrogenase AMT6 of Alternaria alternata (Alternaria rot fungus).